Here is a 479-residue protein sequence, read N- to C-terminus: Ribosomal RNA small subunit methyltransferase F (479 aa).

S-adenosyl-L-methionine-binding positions include 125–131, Glu149, Asp176, and Asp194; that span reads AAAPGSK. Cys247 functions as the Nucleophile in the catalytic mechanism.

The protein belongs to the class I-like SAM-binding methyltransferase superfamily. RsmB/NOP family.

The protein resides in the cytoplasm. The catalysed reaction is cytidine(1407) in 16S rRNA + S-adenosyl-L-methionine = 5-methylcytidine(1407) in 16S rRNA + S-adenosyl-L-homocysteine + H(+). Its function is as follows. Specifically methylates the cytosine at position 1407 (m5C1407) of 16S rRNA. This Escherichia coli (strain UTI89 / UPEC) protein is Ribosomal RNA small subunit methyltransferase F.